The following is an 825-amino-acid chain: Fibrous sheath CABYR-binding protein (825 aa).

Disordered regions lie at residues 1–43 and 113–139; these read MVGK…SYSA and QDVE…RTGY. Residues 21-40 are compositionally biased toward polar residues; the sequence is KSSSPKATHRIGNTSGSKGS. Serine 160 carries the phosphoserine modification. Disordered regions lie at residues 168-232, 244-718, and 732-751; these read SRPD…LLED, QEGS…DKHS, and GEAS…EDEA. Over residues 200 to 220 the composition is skewed to polar residues; sequence PATNSNEEIGQKNISRTSFTQ. Positions 277–290 are enriched in basic and acidic residues; that stretch reads ATAKAEPRPAEETH. Composition is skewed to low complexity over residues 348-357 and 398-407; these read AEILPPSAEE and PLPAEGALEE. The segment covering 610-676 has biased composition (pro residues); the sequence is VQPPPAEEAP…PAEVQPPPAE (67 aa).

In terms of assembly, interacts with CABYR. Interacts with ROPN1 and ROPN1L; the interaction increases upon spermatozoa capacitation conditions. In terms of processing, phosphorylated by PKA upon spermatozoa capacitation conditions.

It localises to the cell projection. The protein localises to the cilium. The protein resides in the flagellum. Functionally, may be involved in the later stages of fibrous sheath biogenesis and spermatozoa capacitation. Inhibits ROPN1 and ROPN1L SUMOylation. Binds calcium. The sequence is that of Fibrous sheath CABYR-binding protein (FSCB) from Homo sapiens (Human).